The chain runs to 554 residues: Probable oligo-1,6-glucosidase 3 (554 aa).

Catalysis depends on D199, which acts as the Nucleophile. E256 functions as the Proton donor in the catalytic mechanism.

The protein belongs to the glycosyl hydrolase 13 family.

The protein resides in the cytoplasm. It carries out the reaction Hydrolysis of (1-&gt;6)-alpha-D-glucosidic linkages in some oligosaccharides produced from starch and glycogen by alpha-amylase, and in isomaltose.. This is Probable oligo-1,6-glucosidase 3 (yugT) from Bacillus subtilis (strain 168).